The sequence spans 207 residues: Glutathione S-transferase 4 (207 aa).

The region spanning proline 2–glycine 79 is the GST N-terminal domain. Glutathione is bound by residues tyrosine 8, tryptophan 39, lysine 43, glycine 49–leucine 51, and glutamine 63–serine 64. One can recognise a GST C-terminal domain in the interval threonine 81–valine 207.

The protein belongs to the GST superfamily. Sigma family.

The enzyme catalyses RX + glutathione = an S-substituted glutathione + a halide anion + H(+). In terms of biological role, conjugation of reduced glutathione to a wide number of exogenous and endogenous hydrophobic electrophiles. May play a role in the detoxification of reactive oxygen species produced during pathogenic bacterial infection. In Caenorhabditis elegans, this protein is Glutathione S-transferase 4.